Consider the following 28-residue polypeptide: Toxin a (28 aa).

One can recognise an LCN-type CS-alpha/beta domain in the interval 3–28 (VPGNYPLDSYGNCYPCTILGDNQYCI).

This sequence belongs to the long (3 C-C) scorpion toxin superfamily. Expressed by the venom gland.

It localises to the secreted. In terms of biological role, binds to sodium channels (Nav) and affects the channel activation process. The chain is Toxin a from Androctonus crassicauda (Arabian fat-tailed scorpion).